A 155-amino-acid polypeptide reads, in one-letter code: 6,7-dimethyl-8-ribityllumazine synthase (155 aa).

5-amino-6-(D-ribitylamino)uracil-binding positions include F23, 57-59, and 81-83; these read AFE and AVI. 86-87 is a binding site for (2S)-2-hydroxy-3-oxobutyl phosphate; that stretch reads ST. Residue H89 is the Proton donor of the active site. Residue F114 coordinates 5-amino-6-(D-ribitylamino)uracil. R128 is a binding site for (2S)-2-hydroxy-3-oxobutyl phosphate.

Belongs to the DMRL synthase family.

It carries out the reaction (2S)-2-hydroxy-3-oxobutyl phosphate + 5-amino-6-(D-ribitylamino)uracil = 6,7-dimethyl-8-(1-D-ribityl)lumazine + phosphate + 2 H2O + H(+). Its pathway is cofactor biosynthesis; riboflavin biosynthesis; riboflavin from 2-hydroxy-3-oxobutyl phosphate and 5-amino-6-(D-ribitylamino)uracil: step 1/2. In terms of biological role, catalyzes the formation of 6,7-dimethyl-8-ribityllumazine by condensation of 5-amino-6-(D-ribitylamino)uracil with 3,4-dihydroxy-2-butanone 4-phosphate. This is the penultimate step in the biosynthesis of riboflavin. The protein is 6,7-dimethyl-8-ribityllumazine synthase of Pelobacter propionicus (strain DSM 2379 / NBRC 103807 / OttBd1).